Here is a 156-residue protein sequence, read N- to C-terminus: Small ribosomal subunit protein uS7 (156 aa).

The protein belongs to the universal ribosomal protein uS7 family. As to quaternary structure, part of the 30S ribosomal subunit. Contacts proteins S9 and S11.

Its function is as follows. One of the primary rRNA binding proteins, it binds directly to 16S rRNA where it nucleates assembly of the head domain of the 30S subunit. Is located at the subunit interface close to the decoding center, probably blocks exit of the E-site tRNA. In Synechococcus sp. (strain WH7803), this protein is Small ribosomal subunit protein uS7.